A 167-amino-acid chain; its full sequence is Mitochondrial fission 1 protein B (167 aa).

The stretch at 92–125 (REKLYLLALGYYRSGDFSRSRDCIERCLEVEPES) is one TPR repeat. A helical membrane pass occupies residues 144–164 (VIGVGIAVTAVGVVAGIAAAI).

The protein belongs to the FIS1 family. In terms of assembly, interacts with PEX11A, PEX11B, PEX11C, PEX11D and PEX11E.

It localises to the mitochondrion outer membrane. It is found in the peroxisome membrane. Its function is as follows. Component of the peroxisomal and mitochondrial division machineries. Plays a role in promoting the fission of mitochondria and peroxisomes. In association with PEX11C, PEX11D, PEX11E and DRP3A, is involved in cell cycle-associated constitutive self-replication of preexisting peroxisomes. This Arabidopsis thaliana (Mouse-ear cress) protein is Mitochondrial fission 1 protein B (FIS1B).